The following is a 502-amino-acid chain: Probable zinc metalloprotease MGG_02107 (502 aa).

Positions 1 to 21 (MRSPPGAVAALASVAAQLATA) are cleaved as a signal peptide. 3 residues coordinate Zn(2+): H182, D202, and E235. A glycan (N-linked (GlcNAc...) asparagine) is linked at N250. D262 lines the Zn(2+) pocket. A disordered region spans residues 284 to 307 (QGGSPAGESKERAETRASIGGEND). 3 N-linked (GlcNAc...) asparagine glycosylation sites follow: N375, N417, and N427. Positions 414 to 502 (QVRNVTVDTS…KSPATMPFPG (89 aa)) constitute a Fibronectin type-III domain.

Belongs to the peptidase M28 family. M28B subfamily. It depends on Zn(2+) as a cofactor.

The protein localises to the secreted. In Pyricularia oryzae (strain 70-15 / ATCC MYA-4617 / FGSC 8958) (Rice blast fungus), this protein is Probable zinc metalloprotease MGG_02107.